The following is a 601-amino-acid chain: MSTPLDHIRNFSIVAHIDHGKSTLADRLIQSTGGLELRDMKEQVLDSMDIERERGITIKAQTVRLKYRANNGEDYILNLIDTPGHVDFAYEVSRSLAACEGSLLVVDASQGVEAQTLANVYQAIDNNHEIVVVLNKVDLPAAEPERIREQVEEVIGIDASGAVLISAKTGLGIPDVLEAIVHQLPPPREGDATAPLKAMLVDSWYDAYLGVIVLVRIIDGVLKKGQTIRMMGTGAKYLVERTGVFTPARINVDELGPGEFGFFTGSIKEVADTRVGDTITEDKRPTAQALPGFKPAQPVVFCGLFPVDAADFEDLRAAVGKLRLNDASFSYEMETSAALGFGYRCGFLGLLHLEIIQERLEREFNLDLIATAPSVVYRLLLNDGSVKELHNPADMPDVVKISAIEEPWIRATILTPDDYLGGILKLCQDRRGIQADLSYVGKRAMLTYDLPLNEVVFDFYDRLKSISKGYASFDYHLTDYREGDLVKMSILVNEEPVDALSMLVHRTAAEKRGRQMCEKLKELIPHHLFKIPIQAAIGGKVIARETISALRKDVTAKCYGGDVSRKRKLLDKQKEGKKRMRQFGKVDIPQEAFIQALKMGD.

The tr-type G domain occupies 6–188 (DHIRNFSIVA…AIVHQLPPPR (183 aa)). GTP is bound by residues 18–23 (DHGKST) and 135–138 (NKVD).

The protein belongs to the TRAFAC class translation factor GTPase superfamily. Classic translation factor GTPase family. LepA subfamily.

It localises to the cell inner membrane. It carries out the reaction GTP + H2O = GDP + phosphate + H(+). Its function is as follows. Required for accurate and efficient protein synthesis under certain stress conditions. May act as a fidelity factor of the translation reaction, by catalyzing a one-codon backward translocation of tRNAs on improperly translocated ribosomes. Back-translocation proceeds from a post-translocation (POST) complex to a pre-translocation (PRE) complex, thus giving elongation factor G a second chance to translocate the tRNAs correctly. Binds to ribosomes in a GTP-dependent manner. This chain is Elongation factor 4, found in Mesorhizobium japonicum (strain LMG 29417 / CECT 9101 / MAFF 303099) (Mesorhizobium loti (strain MAFF 303099)).